The following is a 1097-amino-acid chain: Transmembrane protein 132D (1097 aa).

Residues 1–30 (MCPSEMGTLWYLWSPVLISLAALFSKVTEG) form the signal peptide. Over 31 to 913 (RGILESIQRF…LDQAAKGLSD (883 aa)) the chain is Extracellular. Over residues 233–245 (DERGDCAKEDSRK) the composition is skewed to basic and acidic residues. The tract at residues 233 to 263 (DERGDCAKEDSRKSGGTPAGHNDVDESSPPL) is disordered. Residues 914 to 934 (LEIGMYALLGVFCLAILVFLI) form a helical membrane-spanning segment. Residues 935 to 1097 (NCVTFALKYR…SCMERLHEHV (163 aa)) lie on the Cytoplasmic side of the membrane. The interval 1021-1042 (MLTDDQEQKSEPPTSPTSKRKR) is disordered.

This sequence belongs to the TMEM132 family. Expressed in mature oligodendrocytes in the white and gray matter of the brain.

The protein localises to the membrane. Functionally, regulates neuronal morphology via inhibition of the WAVE regulatory complex (WCR), a complex that controls F-actin cytoskeletal dynamics. The sequence is that of Transmembrane protein 132D (Tmem132d) from Mus musculus (Mouse).